Reading from the N-terminus, the 295-residue chain is Glycine--tRNA ligase alpha subunit (295 aa).

Belongs to the class-II aminoacyl-tRNA synthetase family. Tetramer of two alpha and two beta subunits.

Its subcellular location is the cytoplasm. The catalysed reaction is tRNA(Gly) + glycine + ATP = glycyl-tRNA(Gly) + AMP + diphosphate. This is Glycine--tRNA ligase alpha subunit from Rhodospirillum rubrum (strain ATCC 11170 / ATH 1.1.1 / DSM 467 / LMG 4362 / NCIMB 8255 / S1).